The chain runs to 160 residues: SsrA-binding protein (160 aa).

The protein belongs to the SmpB family.

It localises to the cytoplasm. Required for rescue of stalled ribosomes mediated by trans-translation. Binds to transfer-messenger RNA (tmRNA), required for stable association of tmRNA with ribosomes. tmRNA and SmpB together mimic tRNA shape, replacing the anticodon stem-loop with SmpB. tmRNA is encoded by the ssrA gene; the 2 termini fold to resemble tRNA(Ala) and it encodes a 'tag peptide', a short internal open reading frame. During trans-translation Ala-aminoacylated tmRNA acts like a tRNA, entering the A-site of stalled ribosomes, displacing the stalled mRNA. The ribosome then switches to translate the ORF on the tmRNA; the nascent peptide is terminated with the 'tag peptide' encoded by the tmRNA and targeted for degradation. The ribosome is freed to recommence translation, which seems to be the essential function of trans-translation. The sequence is that of SsrA-binding protein from Zymomonas mobilis subsp. mobilis (strain ATCC 31821 / ZM4 / CP4).